We begin with the raw amino-acid sequence, 507 residues long: ATP synthase subunit alpha, chloroplastic (507 aa).

170 to 177 (GDRQTGKT) contributes to the ATP binding site. Residue T257 is modified to Phosphothreonine.

The protein belongs to the ATPase alpha/beta chains family. In terms of assembly, F-type ATPases have 2 components, CF(1) - the catalytic core - and CF(0) - the membrane proton channel. CF(1) has five subunits: alpha(3), beta(3), gamma(1), delta(1), epsilon(1). CF(0) has four main subunits: a, b, b' and c.

The protein localises to the plastid. It is found in the chloroplast thylakoid membrane. It carries out the reaction ATP + H2O + 4 H(+)(in) = ADP + phosphate + 5 H(+)(out). In terms of biological role, produces ATP from ADP in the presence of a proton gradient across the membrane. The alpha chain is a regulatory subunit. This is ATP synthase subunit alpha, chloroplastic from Crucihimalaya wallichii (Rock-cress).